Here is a 359-residue protein sequence, read N- to C-terminus: Pyruvate dehydrogenase E1 component subunit beta, mitochondrial (359 aa).

The transit peptide at 1 to 30 (MAVVAGLVRGPLRQASGLLKRRFHRSAPAA) directs the protein to the mitochondrion. The residue at position 67 (tyrosine 67) is a Phosphotyrosine. Glutamate 89 is a binding site for thiamine diphosphate. K(+) contacts are provided by isoleucine 142, alanine 190, isoleucine 191, aspartate 193, and asparagine 195. Lysine 354 bears the N6-acetyllysine mark.

In terms of assembly, heterotetramer of two PDHA1 and two PDHB subunits. The heterotetramer interacts with DLAT, and is part of the multimeric pyruvate dehydrogenase complex that contains multiple copies of pyruvate dehydrogenase (E1), dihydrolipoamide acetyltransferase (DLAT, E2) and lipoamide dehydrogenase (DLD, E3). These subunits are bound to an inner core composed of about 48 DLAT and 12 PDHX molecules. Interacts with DLAT. Thiamine diphosphate is required as a cofactor.

Its subcellular location is the mitochondrion matrix. The catalysed reaction is N(6)-[(R)-lipoyl]-L-lysyl-[protein] + pyruvate + H(+) = N(6)-[(R)-S(8)-acetyldihydrolipoyl]-L-lysyl-[protein] + CO2. Its function is as follows. The pyruvate dehydrogenase complex catalyzes the overall conversion of pyruvate to acetyl-CoA and CO(2), and thereby links the glycolytic pathway to the tricarboxylic cycle. This is Pyruvate dehydrogenase E1 component subunit beta, mitochondrial (Pdhb) from Mus musculus (Mouse).